Consider the following 675-residue polypeptide: MIKLIIDGSEIEISEGSTVYQACIQAGKQIPHFCYHARLKIAGNCRMCLVEIEKSQKPVASCAMPVSNGMVIHTDTSMVKKAREGVMEFLLINHPLDCPICDQGGECDLQDQAFRYGKGTNRFHENKRSIKDKYMGPLIKTAMTRCIQCTRCIRFANDIAGIEEIGAINRGEHMEVTSYLEQTLDSEISGNMIDICPVGALNSKPYAFKARKWELKHTASIGVHDAEGSNIRIDSRADEIMRILPSVNEAINEAWISDKNRFCYDGLKYQRLDHPYIRKNGKLVEVSWSEALKTIMDKIKSVKPEKIAAIAGSIVSVEAMFMLKILLQKLGSNNYTVNQFNYKIDTSERGNYLFNTTIVGVEKADLCLLIGANIRQIAPILNSRIGRRVRIGALKVVRIGIGHNQTYKIHDLGNDIKIIEDLAVGTHEYTKAFKEAKYPMIIVGDGVYGRDDGYALLSLIHKVVDKYNMMRDDWQGFNILHNHASIVGGLDIGFNTAIKFEGVKLAYLLGADAIPFDKLKSAFIIYQGHHGDVGAMSADVILPSAAYTEQSGIYVNLEGRPQIAQKAVSPVGRAKEDIEIIKEIAGYLKIDIGMDNLQEVRIRLAKEYNIFANIDKITANRFTQFISIDKLSQEPIAARPINYYMTDVISKNSVTMAKCVEAKEERKRDVAKVFY.

One can recognise a 2Fe-2S ferredoxin-type domain in the interval 1-78 (MIKLIIDGSE…GMVIHTDTSM (78 aa)). [2Fe-2S] cluster contacts are provided by cysteine 34, cysteine 45, cysteine 48, and cysteine 62. The region spanning 78-117 (MVKKAREGVMEFLLINHPLDCPICDQGGECDLQDQAFRYG) is the 4Fe-4S His(Cys)3-ligated-type domain. Positions 94, 98, 101, 107, 146, 149, 152, and 196 each coordinate [4Fe-4S] cluster. The 4Fe-4S Mo/W bis-MGD-type domain occupies 215–271 (LKHTASIGVHDAEGSNIRIDSRADEIMRILPSVNEAINEAWISDKNRFCYDGLKYQR).

The protein belongs to the complex I 75 kDa subunit family. The cofactor is [2Fe-2S] cluster. [4Fe-4S] cluster serves as cofactor.

It catalyses the reaction a quinone + NADH + 5 H(+)(in) = a quinol + NAD(+) + 4 H(+)(out). Functionally, NDH-1 shuttles electrons from NADH, via FMN and iron-sulfur (Fe-S) centers, to quinones in the respiratory chain. Couples the redox reaction to proton translocation (for every two electrons transferred, four hydrogen ions are translocated across the cytoplasmic membrane), and thus conserves the redox energy in a proton gradient. This is NADH-quinone oxidoreductase subunit G (nuoG) from Rickettsia typhi (strain ATCC VR-144 / Wilmington).